Here is a 596-residue protein sequence, read N- to C-terminus: MKNIRNFSIIAHIDHGKSTLSDRLIQHCGGLQAREMEAQVLDSMDIERERGITIKAQSVTLDYKAKDGEIYQLNFIDTPGHVDFSYEVSRSLASCEGALLVVDAGQGVEAQTVANCYTALEMDLEVLPILNKIDLPQADPERVCEEIEHIIGIDATDAVTCSAKTGIGIEDVLETIVKNIPSPAGQIDAPLQALIVDSWFDNYQGVVSLVRVINGEVKKGDKMLVMSTGQVHQIDKVGIFTPKQTDTGVLRAGEVGFIIAGIKEIHGAPVGDTITISKKETANALPGFKKAQPQVYAGIFPISSDDYENFRDALNKLSLNDASLFFEPENSSALGFGFRIGFLGMLHMEIIQERLAREYDLDLITTAPTVNYEIASTNGDVISIDNPADLPAINNIEEIREPIVQANILVPQEYLGNVITLCIEKRGVQKDLIYHGNQVAVTYELPMAEVVMDFFDKLKSTSRGYASLDYHFIRFEAADMVRVDVMINGDRVDALAMITHRANSVARGRLLVDKLKELIHRQMFDIAIQAAIGNNVIARTTVKQLRKNVTAKCYGGDISRKKKLLQKQKDGKKRMKQVGNVEVPQEAFLAVLKLDS.

Residues 2–184 (KNIRNFSIIA…TIVKNIPSPA (183 aa)) form the tr-type G domain. GTP-binding positions include 14–19 (DHGKST) and 131–134 (NKID).

This sequence belongs to the TRAFAC class translation factor GTPase superfamily. Classic translation factor GTPase family. LepA subfamily.

The protein localises to the cell inner membrane. It carries out the reaction GTP + H2O = GDP + phosphate + H(+). Functionally, required for accurate and efficient protein synthesis under certain stress conditions. May act as a fidelity factor of the translation reaction, by catalyzing a one-codon backward translocation of tRNAs on improperly translocated ribosomes. Back-translocation proceeds from a post-translocation (POST) complex to a pre-translocation (PRE) complex, thus giving elongation factor G a second chance to translocate the tRNAs correctly. Binds to ribosomes in a GTP-dependent manner. The polypeptide is Elongation factor 4 (Colwellia psychrerythraea (strain 34H / ATCC BAA-681) (Vibrio psychroerythus)).